The primary structure comprises 232 residues: Phosphatidylserine decarboxylase proenzyme (232 aa).

Residue Ser-190 is the Schiff-base intermediate with substrate; via pyruvic acid of the active site. Ser-190 bears the Pyruvic acid (Ser); by autocatalysis mark.

This sequence belongs to the phosphatidylserine decarboxylase family. PSD-A subfamily. In terms of assembly, heterodimer of a large membrane-associated beta subunit and a small pyruvoyl-containing alpha subunit. Requires pyruvate as cofactor. Is synthesized initially as an inactive proenzyme. Formation of the active enzyme involves a self-maturation process in which the active site pyruvoyl group is generated from an internal serine residue via an autocatalytic post-translational modification. Two non-identical subunits are generated from the proenzyme in this reaction, and the pyruvate is formed at the N-terminus of the alpha chain, which is derived from the carboxyl end of the proenzyme. The post-translation cleavage follows an unusual pathway, termed non-hydrolytic serinolysis, in which the side chain hydroxyl group of the serine supplies its oxygen atom to form the C-terminus of the beta chain, while the remainder of the serine residue undergoes an oxidative deamination to produce ammonia and the pyruvoyl prosthetic group on the alpha chain.

The protein resides in the cell membrane. It catalyses the reaction a 1,2-diacyl-sn-glycero-3-phospho-L-serine + H(+) = a 1,2-diacyl-sn-glycero-3-phosphoethanolamine + CO2. The protein operates within phospholipid metabolism; phosphatidylethanolamine biosynthesis; phosphatidylethanolamine from CDP-diacylglycerol: step 2/2. In terms of biological role, catalyzes the formation of phosphatidylethanolamine (PtdEtn) from phosphatidylserine (PtdSer). In Rhodopseudomonas palustris (strain HaA2), this protein is Phosphatidylserine decarboxylase proenzyme.